The chain runs to 271 residues: Phosphatidylglycerol--prolipoprotein diacylglyceryl transferase (271 aa).

Helical transmembrane passes span 25–45 (WYGI…KFFV), 60–80 (YFIW…ILIY), 103–123 (FVGI…IATL), 134–154 (WIFL…GRIG), 181–201 (PSQF…VYLA), 209–229 (GELI…CEFY), and 235–255 (GIGF…IMFI). Arg-152 provides a ligand contact to a 1,2-diacyl-sn-glycero-3-phospho-(1'-sn-glycerol).

This sequence belongs to the Lgt family.

Its subcellular location is the cell inner membrane. The enzyme catalyses L-cysteinyl-[prolipoprotein] + a 1,2-diacyl-sn-glycero-3-phospho-(1'-sn-glycerol) = an S-1,2-diacyl-sn-glyceryl-L-cysteinyl-[prolipoprotein] + sn-glycerol 1-phosphate + H(+). The protein operates within protein modification; lipoprotein biosynthesis (diacylglyceryl transfer). Its function is as follows. Catalyzes the transfer of the diacylglyceryl group from phosphatidylglycerol to the sulfhydryl group of the N-terminal cysteine of a prolipoprotein, the first step in the formation of mature lipoproteins. The polypeptide is Phosphatidylglycerol--prolipoprotein diacylglyceryl transferase (Campylobacter jejuni subsp. doylei (strain ATCC BAA-1458 / RM4099 / 269.97)).